The sequence spans 238 residues: Probable transcriptional regulatory protein STER_0242 (238 aa).

The protein belongs to the TACO1 family. YeeN subfamily.

Its subcellular location is the cytoplasm. The chain is Probable transcriptional regulatory protein STER_0242 from Streptococcus thermophilus (strain ATCC BAA-491 / LMD-9).